Here is a 182-residue protein sequence, read N- to C-terminus: UPF0397 protein VV2_1534 (182 aa).

5 consecutive transmembrane segments (helical) span residues 8–28 (VVVI…MFGI), 41–61 (AVLA…VGFI), 72–92 (WGVW…IGLF), 110–130 (FSLF…CSAF), and 146–166 (QLTI…YFIL).

Belongs to the UPF0397 family.

The protein resides in the cell membrane. This is UPF0397 protein VV2_1534 from Vibrio vulnificus (strain CMCP6).